The primary structure comprises 377 residues: Succinyl-diaminopimelate desuccinylase (377 aa).

Position 66 (histidine 66) interacts with Zn(2+). The active site involves aspartate 68. Zn(2+) is bound at residue aspartate 99. Glutamate 133 (proton acceptor) is an active-site residue. The Zn(2+) site is built by glutamate 134, glutamate 162, and histidine 348.

Belongs to the peptidase M20A family. DapE subfamily. Homodimer. Zn(2+) serves as cofactor. Requires Co(2+) as cofactor.

It carries out the reaction N-succinyl-(2S,6S)-2,6-diaminopimelate + H2O = (2S,6S)-2,6-diaminopimelate + succinate. The protein operates within amino-acid biosynthesis; L-lysine biosynthesis via DAP pathway; LL-2,6-diaminopimelate from (S)-tetrahydrodipicolinate (succinylase route): step 3/3. Catalyzes the hydrolysis of N-succinyl-L,L-diaminopimelic acid (SDAP), forming succinate and LL-2,6-diaminopimelate (DAP), an intermediate involved in the bacterial biosynthesis of lysine and meso-diaminopimelic acid, an essential component of bacterial cell walls. This chain is Succinyl-diaminopimelate desuccinylase, found in Histophilus somni (strain 129Pt) (Haemophilus somnus).